Consider the following 466-residue polypeptide: Prophage integrase IntF (466 aa).

The Core-binding (CB) domain occupies 134–239 (KTKVTFSVAW…LLRAFIKWSN (106 aa)). Positions 268 to 445 (KADDCLQKEQ…PLDLLRKWHE (178 aa)) constitute a Tyr recombinase domain. Residues R306, K328, H396, R399, and H422 contribute to the active site. Catalysis depends on Y432, which acts as the O-(3'-phospho-DNA)-tyrosine intermediate.

The protein belongs to the 'phage' integrase family.

Its function is as follows. Integrase is necessary for integration of the phage into the host genome by site-specific recombination. In conjunction with excisionase, integrase is also necessary for excision of the prophage from the host genome. This is Prophage integrase IntF (intF) from Escherichia coli (strain K12).